The following is a 171-amino-acid chain: Translation initiation factor IF-3 (171 aa).

Belongs to the IF-3 family. In terms of assembly, monomer.

It is found in the cytoplasm. Functionally, IF-3 binds to the 30S ribosomal subunit and shifts the equilibrium between 70S ribosomes and their 50S and 30S subunits in favor of the free subunits, thus enhancing the availability of 30S subunits on which protein synthesis initiation begins. The polypeptide is Translation initiation factor IF-3 (Thermus thermophilus (strain ATCC BAA-163 / DSM 7039 / HB27)).